The chain runs to 250 residues: ATP synthase subunit a (250 aa).

6 helical membrane-spanning segments follow: residues Ser-31–Gly-51, Phe-85–Ile-105, Leu-115–Tyr-135, Leu-144–Ile-164, Phe-194–Gly-214, and Val-217–Leu-237.

The protein belongs to the ATPase A chain family. In terms of assembly, F-type ATPases have 2 components, CF(1) - the catalytic core - and CF(0) - the membrane proton channel. CF(1) has five subunits: alpha(3), beta(3), gamma(1), delta(1), epsilon(1). CF(0) has four main subunits: a, b, b' and c.

It is found in the cell inner membrane. In terms of biological role, key component of the proton channel; it plays a direct role in the translocation of protons across the membrane. This is ATP synthase subunit a from Rhodopseudomonas palustris (strain BisB5).